Reading from the N-terminus, the 854-residue chain is Envelope glycoprotein gp150 (854 aa).

Residues 1–783 (MAEGFAANRQ…WIGNIPQYLK (783 aa)) lie on the Extracellular side of the membrane. 15 N-linked (GlcNAc...) asparagine; by host glycosylation sites follow: asparagine 218, asparagine 256, asparagine 267, asparagine 272, asparagine 296, asparagine 328, asparagine 334, asparagine 340, asparagine 416, asparagine 420, asparagine 479, asparagine 497, asparagine 529, asparagine 546, and asparagine 549. Positions 614-634 (VMLALATVLSMAGAGTGATAI) are fusion peptide. Residues 641 to 691 (QQVLATHQEAIEKVTEALKINNLRLVTLEHQVLVIGLKVEAMEKFLYTAFA) adopt a coiled-coil conformation. An immunosuppression region spans residues 660-678 (INNLRLVTLEHQVLVIGLK). N-linked (GlcNAc...) asparagine; by host glycosylation is found at asparagine 715, asparagine 719, asparagine 727, and asparagine 735. Residues 734–770 (YNQTKDLQQRFYEIIMDIEQNNVQGKKGLQQLQEWED) adopt a coiled-coil conformation. A helical transmembrane segment spans residues 784–804 (GLLGGILGIGLGMLLLILCLP). Topologically, residues 805-854 (TLVDCIRNCIHKILGYTVIAMPEVEEEEIQPQMELRRNGRQCGMSEKEEE) are cytoplasmic.

In terms of assembly, the mature envelope protein (Env) consists of a trimer of SU-TM heterodimers attached by noncovalent interactions or by a labile interchain disulfide bond. In terms of processing, specific enzymatic cleavages in vivo yield mature proteins. Envelope glycoproteins are synthesized as an inactive precursor that is N-glycosylated and processed likely by host cell furin or by a furin-like protease in the Golgi to yield the mature SU and TM proteins. The cleavage site between SU and TM requires the minimal sequence [KR]-X-[KR]-R.

It is found in the virion membrane. The protein resides in the host cell membrane. In terms of biological role, the surface protein (SU) attaches the virus to the host cell by binding to its receptor. This interaction triggers the refolding of the transmembrane protein (TM) and is thought to activate its fusogenic potential by unmasking its fusion peptide. Fusion occurs at the host cell plasma membrane. The transmembrane protein (TM) acts as a class I viral fusion protein. Under the current model, the protein has at least 3 conformational states: pre-fusion native state, pre-hairpin intermediate state, and post-fusion hairpin state. During viral and target cell membrane fusion, the coiled coil regions (heptad repeats) assume a trimer-of-hairpins structure, positioning the fusion peptide in close proximity to the C-terminal region of the ectodomain. The formation of this structure appears to drive apposition and subsequent fusion of viral and target cell membranes. Membranes fusion leads to delivery of the nucleocapsid into the cytoplasm. The chain is Envelope glycoprotein gp150 (env) from Feline immunodeficiency virus (isolate Wo) (FIV).